Reading from the N-terminus, the 680-residue chain is MRSFATQQNGIFKSVCSLDCPDQCGLLIHKKDGKIVKVQGDPDHPVTAGNICNKVRNMTERIYDEKRLTTPLKRTGAKGQAIFEPISWKEAIDTITSRWKQLIDEEGAESILPYSFYGNMGKLTAEGMDRRFFYRMGSSQLERTICSKAGSEGYKYTMGISAGIDPEETVHTKLFIFWGINAVSTNMHQITIAQKARKKGAKIVVIDVHKNQTGRLADWFIPIKPGTDSALALGIMHILFKENLHDEAFLSEYTVGYEELREHVKQYDPEKVSTITGVSTEDIYRLAKMYGETSPSFIRIGNGPQHHDNGGMIVRTIACLPAITGQWLHTGGGAIKHNSGILEYNTNALQRPDLLKGRTPRSFNMNQLGRVLLETDPPIRSLFIYGTNPAVVAPEANKVRQGLLREDLFTVVHDLFLTETAAYADIVLPATSAFENTDFYTSYWHHYIQLQQPVIERYGESKSNTEVFRLLAEAMGFTDQELKDSDEVLIRQALDHPDNPHLAEIDYDSLTKHSFMKAKREKPLFPGELPTPSGKIELYSEKMKQDGFPALPTYTPLVTDNEHPFMYVPGPNHNFLNSTFSNNEKHIKLEKTPKLFINTKDAEKHGIVDGAPVRIWNSRGECELTAAVGEQVLPGVVVSQGLWADEQGKKQLVNALTPDRLSDMGGGATFFSGRVQIEKV.

The region spanning 9–66 (NGIFKSVCSLDCPDQCGLLIHKKDGKIVKVQGDPDHPVTAGNICNKVRNMTERIYDEK) is the 4Fe-4S Mo/W bis-MGD-type domain. [4Fe-4S] cluster-binding residues include Cys16, Cys20, Cys24, and Cys52.

Belongs to the prokaryotic molybdopterin-containing oxidoreductase family. Mo-bis(molybdopterin guanine dinucleotide) serves as cofactor.

The polypeptide is Probable oxidoreductase YoaE (yoaE) (Bacillus subtilis (strain 168)).